A 179-amino-acid polypeptide reads, in one-letter code: Ubiquitin-conjugating enzyme E2 C (179 aa).

Residues 1-31 are disordered; that stretch reads MASQNRDPAATSVAAARKGAEPSGGAARGPV. The residue at position 2 (A2) is an N-acetylalanine. Position 3 is a phosphoserine (S3). Positions 30-175 constitute a UBC core domain; the sequence is PVGKRLQQEL…LQETYSKQVT (146 aa). C114 (glycyl thioester intermediate) is an active-site residue.

This sequence belongs to the ubiquitin-conjugating enzyme family. As to quaternary structure, component of the APC/C complex, composed of at least 14 distinct subunits that assemble into a complex of at least 19 chains with a combined molecular mass of around 1.2 MDa. Within this complex, directly interacts with ANAPC2. In terms of processing, autoubiquitinated by the APC/C complex, leading to its degradation by the proteasome. Its degradation plays a central role in APC/C regulation, allowing cyclin-A accumulation before S phase entry. APC/C substrates inhibit the autoubiquitination of UBE2C/UBCH10 but not its E2 function, hence APC/C remaining active until its substrates have been destroyed.

It catalyses the reaction S-ubiquitinyl-[E1 ubiquitin-activating enzyme]-L-cysteine + [E2 ubiquitin-conjugating enzyme]-L-cysteine = [E1 ubiquitin-activating enzyme]-L-cysteine + S-ubiquitinyl-[E2 ubiquitin-conjugating enzyme]-L-cysteine.. It carries out the reaction S-ubiquitinyl-[E1 ubiquitin-activating enzyme]-L-cysteine + [acceptor protein]-L-lysine = [E1 ubiquitin-activating enzyme]-L-cysteine + N(6)-monoubiquitinyl-[acceptor protein]-L-lysine.. It participates in protein modification; protein ubiquitination. Its function is as follows. Accepts ubiquitin from the E1 complex and catalyzes its covalent attachment to other proteins. In vitro catalyzes 'Lys-11'- and 'Lys-48'-linked polyubiquitination. Acts as an essential factor of the anaphase promoting complex/cyclosome (APC/C), a cell cycle-regulated ubiquitin ligase that controls progression through mitosis. Acts by initiating 'Lys-11'-linked polyubiquitin chains on APC/C substrates, leading to the degradation of APC/C substrates by the proteasome and promoting mitotic exit. The polypeptide is Ubiquitin-conjugating enzyme E2 C (UBE2C) (Homo sapiens (Human)).